The following is a 358-amino-acid chain: MGDWSFLGEFLEEVHKHSTVIGKVWLTVLFIFRMLVLGTAAESSWGDEQADFRCDTIQPGCQNVCYDQAFPISHIRYWVLQIIFVSTPSLVYMGHAMHTVRMQEKQKLRDAEKAKEAHRTGAYEYPVAEKAELSCWKEVDGKIVLQGTLLNTYVCTILIRTTMEVAFIVGQYLLYGIFLDTLHVCRRSPCPHPVNCYVSRPTEKNVFIVFMMAVAGLSLFLSLAELYHLGWKKIRQRFGKSRQGVDKHQLPGPPTSLVQSLTPPPDFNQCLKNSSGEKFFSDFSNNMGSRKNPDALATGEVPNQEQIPGEGFIHMHYSQKPEYASGASAGHRLPQGYHSDKRRLSKASSKARSDDLSV.

Residues 1-19 are Cytoplasmic-facing; the sequence is MGDWSFLGEFLEEVHKHST. The helical transmembrane segment at 20–40 threads the bilayer; it reads VIGKVWLTVLFIFRMLVLGTA. Over 41-76 the chain is Extracellular; it reads AESSWGDEQADFRCDTIQPGCQNVCYDQAFPISHIR. A helical transmembrane segment spans residues 77 to 97; the sequence is YWVLQIIFVSTPSLVYMGHAM. Topologically, residues 98 to 164 are cytoplasmic; it reads HTVRMQEKQK…CTILIRTTME (67 aa). Residues 165–185 traverse the membrane as a helical segment; it reads VAFIVGQYLLYGIFLDTLHVC. Residues 186 to 205 are Extracellular-facing; it reads RRSPCPHPVNCYVSRPTEKN. A helical membrane pass occupies residues 206–226; that stretch reads VFIVFMMAVAGLSLFLSLAEL. Topologically, residues 227–358 are cytoplasmic; that stretch reads YHLGWKKIRQ…SKARSDDLSV (132 aa). Disordered stretches follow at residues 242–262 and 318–358; these read RQGV…QSLT and SQKP…DLSV. A phosphoserine mark is found at Ser353 and Ser357.

This sequence belongs to the connexin family. Alpha-type (group II) subfamily. In terms of assembly, a connexon is composed of a hexamer of connexins. In terms of tissue distribution, abundantly expressed in the lung, also expressed in the kidney and heart.

Its subcellular location is the cell membrane. The protein resides in the cell junction. It is found in the gap junction. Functionally, one gap junction consists of a cluster of closely packed pairs of transmembrane channels, the connexons, through which materials of low MW diffuse from one cell to a neighboring cell. This Mus musculus (Mouse) protein is Gap junction alpha-5 protein (Gja5).